The primary structure comprises 461 residues: Chromosomal replication initiator protein DnaA (461 aa).

Residues 1 to 90 (MAVSLWQQCI…RPSARPVAPA (90 aa)) are domain I, interacts with DnaA modulators. The segment at 91 to 124 (PVAAKPVNRQTKAQVGTTSFNTQAEPIINPNHRS) is domain II. The domain III, AAA+ region stretch occupies residues 125-341 (NINPTYQFDN…GALNRVIANA (217 aa)). ATP contacts are provided by Gly169, Gly171, Lys172, and Thr173. A domain IV, binds dsDNA region spans residues 342–461 (NFTGRPITID…YANLIRTLSS (120 aa)).

The protein belongs to the DnaA family. As to quaternary structure, oligomerizes as a right-handed, spiral filament on DNA at oriC.

It is found in the cytoplasm. Its function is as follows. Plays an essential role in the initiation and regulation of chromosomal replication. ATP-DnaA binds to the origin of replication (oriC) to initiate formation of the DNA replication initiation complex once per cell cycle. Binds the DnaA box (a 9 base pair repeat at the origin) and separates the double-stranded (ds)DNA. Forms a right-handed helical filament on oriC DNA; dsDNA binds to the exterior of the filament while single-stranded (ss)DNA is stabiized in the filament's interior. The ATP-DnaA-oriC complex binds and stabilizes one strand of the AT-rich DNA unwinding element (DUE), permitting loading of DNA polymerase. After initiation quickly degrades to an ADP-DnaA complex that is not apt for DNA replication. Binds acidic phospholipids. This is Chromosomal replication initiator protein DnaA from Shewanella frigidimarina (strain NCIMB 400).